The following is a 201-amino-acid chain: Probable GTP-binding protein EngB (201 aa).

Residues 25 to 199 enclose the EngB-type G domain; it reads HGIEIAFIGY…KSKLNFWYEK (175 aa). GTP contacts are provided by residues 33-40, 60-64, 78-81, 145-148, and 178-180; these read GYSNSGKS, GRTQL, DLPG, TKCD, and FSS. Mg(2+) contacts are provided by Ser-40 and Thr-62.

It belongs to the TRAFAC class TrmE-Era-EngA-EngB-Septin-like GTPase superfamily. EngB GTPase family. It depends on Mg(2+) as a cofactor.

Functionally, necessary for normal cell division and for the maintenance of normal septation. The sequence is that of Probable GTP-binding protein EngB from Buchnera aphidicola subsp. Schizaphis graminum (strain Sg).